A 333-amino-acid chain; its full sequence is Taste receptor type 2 member 38 (333 aa).

Topologically, residues 1 to 17 (MLTLTRIRTVSYEVRST) are extracellular. A helical transmembrane segment spans residues 18–38 (FLFISVLEFAVGFLTNAFVFL). Residues 39-55 (VNFWDVVKRQPLSNSDC) lie on the Cytoplasmic side of the membrane. Residues 56–76 (VLLCLSISRLFLHGLLFLSAI) form a helical membrane-spanning segment. Over 77–94 (QLTHFQKLSEPLNHSYQA) the chain is Extracellular. Residues 95-115 (IIMLWMIANQANLWLAACLSL) traverse the membrane as a helical segment. Over 116–142 (LYCSKLIRFSHTFLICLASWVSRKISQ) the chain is Cytoplasmic. Residues 143-163 (MLLGIILCSCICTVLCVWCFF) form a helical membrane-spanning segment. Residues 164-190 (SRPHFTVTTVLFMNNNTRLNWQIKDLN) are Extracellular-facing. Asn-178 is a glycosylation site (N-linked (GlcNAc...) asparagine). A helical membrane pass occupies residues 191-211 (LFYSFLFCYLWSVPPFLLFLV). At 212–251 (SSGMLTVSLGRHMRTMKVYIRDSRDPSLEAHIKALKSLVS) the chain is on the cytoplasmic side. Residues 252–272 (FFCFFVISSCAAFISVPLLIL) traverse the membrane as a helical segment. The Extracellular segment spans residues 273-276 (WRDK). The helical transmembrane segment at 277–297 (IGVMVCVGIMAACPSGHAAVL) threads the bilayer. The Cytoplasmic segment spans residues 298–333 (ISGNAKLRRAVTTILLWAQSSLKVRADHKADSRTPC).

Belongs to the G-protein coupled receptor T2R family.

The protein resides in the membrane. Receptor that may play a role in the perception of bitterness and is gustducin-linked. May play a role in sensing the chemical composition of the gastrointestinal content. The activity of this receptor may stimulate alpha gustducin, mediate PLC-beta-2 activation and lead to the gating of TRPM5. The polypeptide is Taste receptor type 2 member 38 (TAS2R38) (Gorilla gorilla gorilla (Western lowland gorilla)).